The sequence spans 310 residues: Ribosomal RNA small subunit methyltransferase H (310 aa).

S-adenosyl-L-methionine contacts are provided by residues 32-34, Asp52, Phe79, Asp100, and Gln107; that span reads GGH.

It belongs to the methyltransferase superfamily. RsmH family.

It localises to the cytoplasm. The catalysed reaction is cytidine(1402) in 16S rRNA + S-adenosyl-L-methionine = N(4)-methylcytidine(1402) in 16S rRNA + S-adenosyl-L-homocysteine + H(+). In terms of biological role, specifically methylates the N4 position of cytidine in position 1402 (C1402) of 16S rRNA. The chain is Ribosomal RNA small subunit methyltransferase H from Bacillus cereus (strain AH187).